The following is a 147-amino-acid chain: Hemoglobin subunit gamma (147 aa).

The Globin domain maps to His3–His147. His64 and His93 together coordinate heme b.

Belongs to the globin family. In terms of assembly, heterotetramer of two alpha chains and two gamma chains in fetal hemoglobin (Hb F). Red blood cells.

Gamma chains make up the fetal hemoglobin F, in combination with alpha chains. The sequence is that of Hemoglobin subunit gamma (HBG) from Macaca fuscata fuscata (Japanese macaque).